Consider the following 86-residue polypeptide: F(1)-ATPase inhibitor STF1, mitochondrial (86 aa).

A mitochondrion-targeting transit peptide spans 1–23 (MLNRCISRNTRLPVNLRIASRFY). Phosphoserine is present on serine 24.

It belongs to the ATPase inhibitor family. As to quaternary structure, monomer and homodimer. Monomeric at pH 5.0 and dimeric at either pH 6.5 or 8.0. The protein aggregates increasingly strongly with increasing pH.

It is found in the mitochondrion. Endogenous low-affinity ATPase inhibitor, which inhibits specifically the reverse ATPase reaction of mitochondrial F(1)F(0)-type ATP synthase. Found to stabilize, together with STF2, a complex of intrinsic ATPase inhibitor INH1 and proton-translocating ATPase in mitochondrial membranes. Binds directly to purified F1-ATPase. The sequence is that of F(1)-ATPase inhibitor STF1, mitochondrial (STF1) from Saccharomyces cerevisiae (strain ATCC 204508 / S288c) (Baker's yeast).